A 250-amino-acid chain; its full sequence is Entry-fusion complex associated protein OPG095 (250 aa).

A lipid anchor (N-myristoyl glycine; by host) is attached at G2. The interval 2–12 (GAAASIQTTVN) is targeting to MV membrane. Residues 2-183 (GAAASIQTTV…IAPKQVAGTG (182 aa)) lie on the Virion surface side of the membrane. 3 cysteine pairs are disulfide-bonded: C34/C57, C49/C136, and C116/C158. Residues 184–204 (VQFYMIVIGVIILAALFMYYA) traverse the membrane as a helical segment. Residues 205–250 (KRMLFTSTNDKIKLILANKENVHWTTYMDTFFRTSPMVIATTDMQN) are Intravirion-facing.

The protein belongs to the orthopoxvirus OPG095 family. In terms of assembly, component of the entry fusion complex (EFC) composed of OPG053/F9, OPG076/O3, OPG086/G3, OPG094/G9, OPG095/L1, OPG099/L5, OPG107/H2, OPG143/A16, OPG104/J5, OPG147/A21 and OPG155/A28. Except for OPG095/L1 and OPG053/F9, each of the EFC proteins is required for assembly or stability of the complex. Myristoylated. In terms of processing, disulfid bonds are oxidized in the cytoplasm by OPG088 protein. Post-translationally, unglycosylated because produced in viral factories instead of the classic ER -Golgi route.

The protein resides in the virion membrane. Component of the entry fusion complex (EFC), which consists of 11 proteins. During cell infection, this complex mediates entry of the virion core into the host cytoplasm by a two-step mechanism consisting of lipid mixing of the viral and cellular membranes and subsequent pore formation. The polypeptide is Entry-fusion complex associated protein OPG095 (OPG099) (Bos taurus (Bovine)).